Consider the following 350-residue polypeptide: Biotin synthase (350 aa).

Residues 38-256 (NHVQVSTLLS…IAIARIMMPQ (219 aa)) form the Radical SAM core domain. [4Fe-4S] cluster contacts are provided by cysteine 53, cysteine 57, and cysteine 60. 4 residues coordinate [2Fe-2S] cluster: cysteine 97, cysteine 128, cysteine 188, and arginine 260.

Belongs to the radical SAM superfamily. Biotin synthase family. In terms of assembly, homodimer. The cofactor is [4Fe-4S] cluster. [2Fe-2S] cluster serves as cofactor.

The catalysed reaction is (4R,5S)-dethiobiotin + (sulfur carrier)-SH + 2 reduced [2Fe-2S]-[ferredoxin] + 2 S-adenosyl-L-methionine = (sulfur carrier)-H + biotin + 2 5'-deoxyadenosine + 2 L-methionine + 2 oxidized [2Fe-2S]-[ferredoxin]. It participates in cofactor biosynthesis; biotin biosynthesis; biotin from 7,8-diaminononanoate: step 2/2. Functionally, catalyzes the conversion of dethiobiotin (DTB) to biotin by the insertion of a sulfur atom into dethiobiotin via a radical-based mechanism. The chain is Biotin synthase from Vibrio parahaemolyticus serotype O3:K6 (strain RIMD 2210633).